Consider the following 385-residue polypeptide: 8-amino-7-oxononanoate synthase (385 aa).

R21 is a binding site for substrate. Pyridoxal 5'-phosphate is bound at residue 108 to 109; it reads GF. H133 is a substrate binding site. Positions 179, 207, and 233 each coordinate pyridoxal 5'-phosphate. The residue at position 236 (K236) is an N6-(pyridoxal phosphate)lysine. T352 serves as a coordination point for substrate.

Belongs to the class-II pyridoxal-phosphate-dependent aminotransferase family. BioF subfamily. As to quaternary structure, homodimer. Pyridoxal 5'-phosphate serves as cofactor.

The enzyme catalyses 6-carboxyhexanoyl-[ACP] + L-alanine + H(+) = (8S)-8-amino-7-oxononanoate + holo-[ACP] + CO2. The protein operates within cofactor biosynthesis; biotin biosynthesis. Its function is as follows. Catalyzes the decarboxylative condensation of pimeloyl-[acyl-carrier protein] and L-alanine to produce 8-amino-7-oxononanoate (AON), [acyl-carrier protein], and carbon dioxide. The sequence is that of 8-amino-7-oxononanoate synthase from Salmonella enteritidis PT4 (strain P125109).